A 292-amino-acid chain; its full sequence is 4-hydroxy-tetrahydrodipicolinate synthase (292 aa).

Thr45 serves as a coordination point for pyruvate. Catalysis depends on Tyr133, which acts as the Proton donor/acceptor. Lys161 (schiff-base intermediate with substrate) is an active-site residue. Ile203 lines the pyruvate pocket.

This sequence belongs to the DapA family. Homotetramer; dimer of dimers.

Its subcellular location is the cytoplasm. The catalysed reaction is L-aspartate 4-semialdehyde + pyruvate = (2S,4S)-4-hydroxy-2,3,4,5-tetrahydrodipicolinate + H2O + H(+). The protein operates within amino-acid biosynthesis; L-lysine biosynthesis via DAP pathway; (S)-tetrahydrodipicolinate from L-aspartate: step 3/4. Catalyzes the condensation of (S)-aspartate-beta-semialdehyde [(S)-ASA] and pyruvate to 4-hydroxy-tetrahydrodipicolinate (HTPA). This Salmonella arizonae (strain ATCC BAA-731 / CDC346-86 / RSK2980) protein is 4-hydroxy-tetrahydrodipicolinate synthase.